Consider the following 470-residue polypeptide: Tubulin gamma chain (470 aa).

144–150 provides a ligand contact to GTP; the sequence is AGGTGSG.

Belongs to the tubulin family.

Its subcellular location is the cytoplasm. It localises to the cytoskeleton. It is found in the microtubule organizing center. The protein resides in the spindle pole body. Its function is as follows. Tubulin is the major constituent of microtubules. The gamma chain is found at microtubule organizing centers (MTOC) such as the spindle poles or the centrosome, suggesting that it is involved in the minus-end nucleation of microtubule assembly. The polypeptide is Tubulin gamma chain (TUB4) (Eremothecium gossypii (strain ATCC 10895 / CBS 109.51 / FGSC 9923 / NRRL Y-1056) (Yeast)).